Consider the following 1108-residue polypeptide: TBC1 domain family member 8B (1108 aa).

2 GRAM domains span residues 143-210 (LRFE…ERTS) and 283-351 (QSFR…ELPD). A Rab-GAP TBC domain is found at 469–656 (GVPETLRGEL…NVVDCFFYDG (188 aa)). In terms of domain architecture, EF-hand spans 822–857 (HSRSLARSAFHLLDENGDGLVNFKEFICGLDILYNR). Ca(2+) contacts are provided by Asp835, Asn837, Asp839, and Glu846. A disordered region spans residues 961–1059 (GRKLQDSSPQ…PTDTPSSPCT (99 aa)). Residues 967–998 (SSPQKTPQTTPTSTSQPESSPTKPTSPESETP) show a composition bias toward low complexity. The segment covering 1010–1024 (SPVSQHETAPSHSDI) has biased composition (polar residues). Residues 1025-1057 (TPNSTSHPSTPTSSPTETSSPVLDTPTDTPSSP) show a composition bias toward low complexity.

The protein localises to the cytoplasm. Its subcellular location is the cytosol. Its function is as follows. Involved in vesicular recycling, probably as a GTPase-activating protein for Rab family protein(s). This is TBC1 domain family member 8B (tbc1d8b) from Danio rerio (Zebrafish).